A 217-amino-acid chain; its full sequence is tRNA (guanine-N(7)-)-methyltransferase (217 aa).

S-adenosyl-L-methionine-binding residues include E44, D69, D96, and D118. Residue D118 is part of the active site. Substrate is bound at residue K122. The segment at 124–129 (RHEKRR) is interaction with RNA. Substrate-binding positions include D154 and 193–196 (TEYE).

Belongs to the class I-like SAM-binding methyltransferase superfamily. TrmB family.

It catalyses the reaction guanosine(46) in tRNA + S-adenosyl-L-methionine = N(7)-methylguanosine(46) in tRNA + S-adenosyl-L-homocysteine. Its pathway is tRNA modification; N(7)-methylguanine-tRNA biosynthesis. In terms of biological role, catalyzes the formation of N(7)-methylguanine at position 46 (m7G46) in tRNA. This chain is tRNA (guanine-N(7)-)-methyltransferase, found in Lactococcus lactis subsp. lactis (strain IL1403) (Streptococcus lactis).